Here is a 335-residue protein sequence, read N- to C-terminus: Beta-ketoacyl-[acyl-carrier-protein] synthase III (335 aa).

Residues cysteine 119 and histidine 261 contribute to the active site. Positions glutamine 262–arginine 266 are ACP-binding. Asparagine 291 is a catalytic residue.

The protein belongs to the thiolase-like superfamily. FabH family. Homodimer.

Its subcellular location is the cytoplasm. It carries out the reaction malonyl-[ACP] + acetyl-CoA + H(+) = 3-oxobutanoyl-[ACP] + CO2 + CoA. Its pathway is lipid metabolism; fatty acid biosynthesis. Catalyzes the condensation reaction of fatty acid synthesis by the addition to an acyl acceptor of two carbons from malonyl-ACP. Catalyzes the first condensation reaction which initiates fatty acid synthesis and may therefore play a role in governing the total rate of fatty acid production. Possesses both acetoacetyl-ACP synthase and acetyl transacylase activities. Its substrate specificity determines the biosynthesis of branched-chain and/or straight-chain of fatty acids. The polypeptide is Beta-ketoacyl-[acyl-carrier-protein] synthase III (Prochlorococcus marinus subsp. pastoris (strain CCMP1986 / NIES-2087 / MED4)).